Consider the following 471-residue polypeptide: uncharacterized protein (471 aa).

A run of 4 helical transmembrane segments spans residues 10–30 (ALWL…LFVI), 46–66 (IDDR…WFAI), 87–107 (TLII…LYFS), and 280–300 (IVVG…LYFA).

This sequence belongs to the bacterial sugar transferase family.

It is found in the cell membrane. The protein operates within glycan metabolism; exopolysaccharide biosynthesis. In terms of biological role, may function as a sugar transferase. This is an uncharacterized protein from Haemophilus influenzae (strain ATCC 51907 / DSM 11121 / KW20 / Rd).